A 427-amino-acid chain; its full sequence is 3-phosphoshikimate 1-carboxyvinyltransferase (427 aa).

Residues Lys-20, Ser-21, and Arg-25 each contribute to the 3-phosphoshikimate site. Lys-20 lines the phosphoenolpyruvate pocket. Gly-90 and Arg-118 together coordinate phosphoenolpyruvate. 3-phosphoshikimate-binding residues include Ser-163, Ser-164, Gln-165, Ser-191, Asp-309, and Lys-336. Gln-165 is a phosphoenolpyruvate binding site. Asp-309 functions as the Proton acceptor in the catalytic mechanism. Phosphoenolpyruvate is bound by residues Arg-340 and Arg-381.

This sequence belongs to the EPSP synthase family. In terms of assembly, monomer.

The protein resides in the cytoplasm. It catalyses the reaction 3-phosphoshikimate + phosphoenolpyruvate = 5-O-(1-carboxyvinyl)-3-phosphoshikimate + phosphate. The protein operates within metabolic intermediate biosynthesis; chorismate biosynthesis. Catalyzes the transfer of the enolpyruvyl moiety of phosphoenolpyruvate (PEP) to the 5-hydroxyl of shikimate-3-phosphate (S3P) to produce enolpyruvyl shikimate-3-phosphate and inorganic phosphate. This is 3-phosphoshikimate 1-carboxyvinyltransferase from Methanococcoides burtonii (strain DSM 6242 / NBRC 107633 / OCM 468 / ACE-M).